The following is a 168-amino-acid chain: Small ribosomal subunit protein uS5 (168 aa).

The S5 DRBM domain maps to 13–76 (LQEKLIAVNR…EKARRNMVTV (64 aa)).

This sequence belongs to the universal ribosomal protein uS5 family. Part of the 30S ribosomal subunit. Contacts proteins S4 and S8.

With S4 and S12 plays an important role in translational accuracy. Functionally, located at the back of the 30S subunit body where it stabilizes the conformation of the head with respect to the body. The polypeptide is Small ribosomal subunit protein uS5 (Shewanella amazonensis (strain ATCC BAA-1098 / SB2B)).